Here is a 554-residue protein sequence, read N- to C-terminus: Glucose-6-phosphate isomerase (554 aa).

The active-site Proton donor is Glu-359. Residues His-390 and Lys-518 contribute to the active site.

It belongs to the GPI family.

Its subcellular location is the cytoplasm. It catalyses the reaction alpha-D-glucose 6-phosphate = beta-D-fructose 6-phosphate. Its pathway is carbohydrate biosynthesis; gluconeogenesis. The protein operates within carbohydrate degradation; glycolysis; D-glyceraldehyde 3-phosphate and glycerone phosphate from D-glucose: step 2/4. Catalyzes the reversible isomerization of glucose-6-phosphate to fructose-6-phosphate. The polypeptide is Glucose-6-phosphate isomerase (Pseudomonas putida (strain GB-1)).